A 173-amino-acid chain; its full sequence is NADH-ubiquinone oxidoreductase chain 6 (173 aa).

Transmembrane regions (helical) follow at residues 1–21 (MTYIVSLFLLGLVLGLVAVAS), 27–47 (FAALGLVVAAGVGCGVLVGYG), 53–73 (LVLFLIYLGGMLVVFAYSAAL), 86–106 (SVLGYVVVYTVGVMLVAGWFW), and 139–159 (YGGGMLIVCAWVLLLTLFVVL).

Belongs to the complex I subunit 6 family.

The protein resides in the mitochondrion membrane. It carries out the reaction a ubiquinone + NADH + 5 H(+)(in) = a ubiquinol + NAD(+) + 4 H(+)(out). Core subunit of the mitochondrial membrane respiratory chain NADH dehydrogenase (Complex I) that is believed to belong to the minimal assembly required for catalysis. Complex I functions in the transfer of electrons from NADH to the respiratory chain. The immediate electron acceptor for the enzyme is believed to be ubiquinone. The protein is NADH-ubiquinone oxidoreductase chain 6 (MT-ND6) of Salmo salar (Atlantic salmon).